Here is a 478-residue protein sequence, read N- to C-terminus: Light-independent protochlorophyllide reductase subunit N (478 aa).

The [4Fe-4S] cluster site is built by Cys-22, Cys-47, and Cys-107.

The protein belongs to the BchN/ChlN family. As to quaternary structure, protochlorophyllide reductase is composed of three subunits; ChlL, ChlN and ChlB. Forms a heterotetramer of two ChlB and two ChlN subunits. It depends on [4Fe-4S] cluster as a cofactor.

It localises to the plastid. The protein resides in the chloroplast. The enzyme catalyses chlorophyllide a + oxidized 2[4Fe-4S]-[ferredoxin] + 2 ADP + 2 phosphate = protochlorophyllide a + reduced 2[4Fe-4S]-[ferredoxin] + 2 ATP + 2 H2O. Its pathway is porphyrin-containing compound metabolism; chlorophyll biosynthesis (light-independent). Functionally, component of the dark-operative protochlorophyllide reductase (DPOR) that uses Mg-ATP and reduced ferredoxin to reduce ring D of protochlorophyllide (Pchlide) to form chlorophyllide a (Chlide). This reaction is light-independent. The NB-protein (ChlN-ChlB) is the catalytic component of the complex. The polypeptide is Light-independent protochlorophyllide reductase subunit N (Chlorokybus atmophyticus (Soil alga)).